Here is a 269-residue protein sequence, read N- to C-terminus: MKVYPQVLSIAGSDSGGGAGIQADLKAFQTFGVFGTSVITCITAQNTQGVHGVYPLSVESVKAQILAIRDDFSIKAFKMGALCNAQIIECVANALETCDFGLCVLDPVMVAKNGALLLEEEAILSLKKRLLPKTNLLTPNLPEVYALTGVQARDDKSASKAMGVLRDLGVKNAVIKGGHTEHFQGEFSNDWVFLEDAEFILSAKRFNTKNTHGTGCTLSSLIVGLLAQGLDLKNAITKAKELLTIIIQNPLNIGHGHGPLNLWSIKKHV.

A 4-amino-5-hydroxymethyl-2-methylpyrimidine-binding site is contributed by glutamine 45.

It belongs to the ThiD family.

It carries out the reaction 4-amino-5-hydroxymethyl-2-methylpyrimidine + ATP = 4-amino-2-methyl-5-(phosphooxymethyl)pyrimidine + ADP + H(+). The catalysed reaction is 4-amino-2-methyl-5-(phosphooxymethyl)pyrimidine + ATP = 4-amino-2-methyl-5-(diphosphooxymethyl)pyrimidine + ADP. It functions in the pathway cofactor biosynthesis; thiamine diphosphate biosynthesis; 4-amino-2-methyl-5-diphosphomethylpyrimidine from 5-amino-1-(5-phospho-D-ribosyl)imidazole: step 2/3. Its pathway is cofactor biosynthesis; thiamine diphosphate biosynthesis; 4-amino-2-methyl-5-diphosphomethylpyrimidine from 5-amino-1-(5-phospho-D-ribosyl)imidazole: step 3/3. In terms of biological role, catalyzes the phosphorylation of hydroxymethylpyrimidine phosphate (HMP-P) to HMP-PP, and of HMP to HMP-P. This chain is Hydroxymethylpyrimidine/phosphomethylpyrimidine kinase (thiD), found in Helicobacter pylori (strain J99 / ATCC 700824) (Campylobacter pylori J99).